We begin with the raw amino-acid sequence, 675 residues long: MKAYKPPVVNKFGVISSTYHEELLKSIFESSNRRKSQKPKPSFSISKEFILRFNHTDNPAEEEELLEQARRLIVRSKRKLGLKTLGSGKHVHLPTAWAEVIYLAQCKGEIQDEALNMLHASLDHVSFDHDQLPALFFLAESVLYRLCCDAFMKGYLYSVEIKLVKIGYLIFLRLFVFFLHGHLESFKQHLLRLQPYLYALHFSEPSYYKYPNIISNVQFILKTSEIICKRELHSEPFVESPDETEDPYSDLNHLQLNKRGYEVNHLLWHSVAAWSCVQNNRPQLTEVLEHLLFYKTQLQTKCWLDSALALMVLGEAAKLDMACLKTLMDLVTDFLENILSAQNQEENYNIYDTSWASEIVFTYTTIIAEVCLYAATSDLRKTALIGFCACKSPQQGISLTDKSEELPELDGASILTLLKYFSSRISDNCEKVIWIGYYGIVYNLVKMSWELQGEQDQDGLRNMIWQTLQKIKDYEQDPRIRCALVIAQAELNGPSDPFCTKATPNSGEEVFSKYIGWRIATTLSRLFFPSLDVAPPKTPVEVDLPRKHTIRERQPAKKRVLRFILKDHSSVVEVSMTPYPNFFTKADKKLEEIIDHHWQKDMEARKREEEAYKAQNQKDKEEKEKIHFQEIMKQRERKLNKQTKPYEIILSEKESGSEKKCGFFELKPSTAPNAK.

A helical transmembrane segment spans residues 163 to 183; that stretch reads LVKIGYLIFLRLFVFFLHGHL. Positions 598 to 634 form a coiled coil; that stretch reads WQKDMEARKREEEAYKAQNQKDKEEKEKIHFQEIMKQ. The segment at 605 to 624 is disordered; that stretch reads RKREEEAYKAQNQKDKEEKE.

High expression in the testis and weak expression levels in the spleen, liver, brain, uterus, lung, epididymis and kidney. Not detected in the heart or ovary.

It localises to the membrane. Plays a critical role for male fertility and sperm motility by regulating sperm cytoplasm removal and maintaining axoneme integrity. This chain is Transmembrane protein 232 (Tmem232), found in Mus musculus (Mouse).